We begin with the raw amino-acid sequence, 547 residues long: Chaperonin GroEL (547 aa).

ATP is bound by residues threonine 30–proline 33, lysine 51, aspartate 87–threonine 91, glycine 415, asparagine 479–alanine 481, and aspartate 495.

This sequence belongs to the chaperonin (HSP60) family. Forms a cylinder of 14 subunits composed of two heptameric rings stacked back-to-back. Interacts with the co-chaperonin GroES.

It localises to the cytoplasm. It carries out the reaction ATP + H2O + a folded polypeptide = ADP + phosphate + an unfolded polypeptide.. In terms of biological role, together with its co-chaperonin GroES, plays an essential role in assisting protein folding. The GroEL-GroES system forms a nano-cage that allows encapsulation of the non-native substrate proteins and provides a physical environment optimized to promote and accelerate protein folding. In Pseudomonas fluorescens (strain ATCC BAA-477 / NRRL B-23932 / Pf-5), this protein is Chaperonin GroEL.